Consider the following 183-residue polypeptide: ATP synthase subunit delta (183 aa).

Belongs to the ATPase delta chain family. As to quaternary structure, F-type ATPases have 2 components, F(1) - the catalytic core - and F(0) - the membrane proton channel. F(1) has five subunits: alpha(3), beta(3), gamma(1), delta(1), epsilon(1). F(0) has three main subunits: a(1), b(2) and c(10-14). The alpha and beta chains form an alternating ring which encloses part of the gamma chain. F(1) is attached to F(0) by a central stalk formed by the gamma and epsilon chains, while a peripheral stalk is formed by the delta and b chains.

It is found in the cell inner membrane. F(1)F(0) ATP synthase produces ATP from ADP in the presence of a proton or sodium gradient. F-type ATPases consist of two structural domains, F(1) containing the extramembraneous catalytic core and F(0) containing the membrane proton channel, linked together by a central stalk and a peripheral stalk. During catalysis, ATP synthesis in the catalytic domain of F(1) is coupled via a rotary mechanism of the central stalk subunits to proton translocation. In terms of biological role, this protein is part of the stalk that links CF(0) to CF(1). It either transmits conformational changes from CF(0) to CF(1) or is implicated in proton conduction. In Desulfatibacillum aliphaticivorans, this protein is ATP synthase subunit delta.